The primary structure comprises 136 residues: Small ribosomal subunit protein uS11c (136 aa).

A disordered region spans residues 1–22; it reads MAKAIPKKGSRGRIGSRKSTRK.

The protein belongs to the universal ribosomal protein uS11 family. Part of the 30S ribosomal subunit.

The protein resides in the plastid. It is found in the chloroplast. In Lactuca sativa (Garden lettuce), this protein is Small ribosomal subunit protein uS11c.